A 253-amino-acid chain; its full sequence is MNRITQKLQEDKKILSIYFSAGYPNLNDTVQIIQDLEKNGVDLIEIGLPFSDPLADGPTIQASSTQALHNGMTTQILFDQLQNIRESVKIPLIIMGYFNPMLQYGVEAFCKKCAEIGIDGLIIPDLPVDVYADEYKAIFEKYGLINVFLITPQTSDERIRFIDSVSNGFIYMVSSASVTGSQSGFGNVQETYFERISNLNLKNPQIVGFGISNKETFNQATKYAKGAIIGSAFIKHLSESGSGKIQEFVGEIR.

Catalysis depends on proton acceptor residues glutamate 45 and aspartate 56.

Belongs to the TrpA family. Tetramer of two alpha and two beta chains.

It catalyses the reaction (1S,2R)-1-C-(indol-3-yl)glycerol 3-phosphate + L-serine = D-glyceraldehyde 3-phosphate + L-tryptophan + H2O. It functions in the pathway amino-acid biosynthesis; L-tryptophan biosynthesis; L-tryptophan from chorismate: step 5/5. The alpha subunit is responsible for the aldol cleavage of indoleglycerol phosphate to indole and glyceraldehyde 3-phosphate. The sequence is that of Tryptophan synthase alpha chain from Flavobacterium johnsoniae (strain ATCC 17061 / DSM 2064 / JCM 8514 / BCRC 14874 / CCUG 350202 / NBRC 14942 / NCIMB 11054 / UW101) (Cytophaga johnsonae).